The chain runs to 416 residues: MEFVKCLGHPEEFYNLLRFRMGGRRNFIPKMDRNSLSNSLKTCYKYLDQTSRSFAAVIQALDGDIRHAVCVFYLILRAMDTVEDDMAISVEKKIPLLRNFHTFLYEPEWRFTESKEKHRVVLEDFPTISLEFRNLAEKYQTVIADICHRMGCGMAEFLNKDVTSKQDWDKYCHYVAGLVGIGLSRLFSASEFEDPIVGEDTECANSMGLFLQKTNIIRDYLEDQQEGRQFWPQEVWGKYVKKLEDFVKPENVDVAVKCLNELITNALQHIPDVITYLSRLRNQSVFNFCAIPQVMAIATLAACYNNHQVFKGVVKIRKGQAVTLMMDATNMPAVKAIIYQYIEEIYHRVPNSDPSASKAKQLISNIRTQSLPNCQLISRSHYSPIYLSFIMLLAALSWQYLSTLSQVTEDYVQREH.

NADP(+)-binding residues include Arg52 and Arg77. The Mg(2+) site is built by Asp80, Glu83, and Asp84. Arg218 serves as a coordination point for NADP(+). The chain crosses the membrane as a helical span at residues 284–304; it reads SVFNFCAIPQVMAIATLAACY. Positions 315 and 317 each coordinate NADP(+). Residues 384-404 form a helical membrane-spanning segment; sequence PIYLSFIMLLAALSWQYLSTL.

Belongs to the phytoene/squalene synthase family. It depends on Mg(2+) as a cofactor.

The protein localises to the endoplasmic reticulum membrane. The enzyme catalyses 2 (2E,6E)-farnesyl diphosphate + NADPH + H(+) = squalene + 2 diphosphate + NADP(+). It carries out the reaction 2 (2E,6E)-farnesyl diphosphate + NADH + H(+) = squalene + 2 diphosphate + NAD(+). It catalyses the reaction presqualene diphosphate + NADH + H(+) = squalene + diphosphate + NAD(+). The catalysed reaction is presqualene diphosphate + NADPH + H(+) = squalene + diphosphate + NADP(+). The enzyme catalyses 2 (2E,6E)-farnesyl diphosphate = presqualene diphosphate + diphosphate. Its pathway is terpene metabolism; lanosterol biosynthesis; lanosterol from farnesyl diphosphate: step 1/3. Catalyzes the condensation of 2 farnesyl pyrophosphate (FPP) moieties to form squalene. Proceeds in two distinct steps. In the first half-reaction, two molecules of FPP react to form the stable presqualene diphosphate intermediate (PSQPP), with concomitant release of a proton and a molecule of inorganic diphosphate. In the second half-reaction, PSQPP undergoes heterolysis, isomerization, and reduction with NADPH or NADH to form squalene. It is the first committed enzyme of the sterol biosynthesis pathway. This is Squalene synthase (Fdft1) from Rattus norvegicus (Rat).